Reading from the N-terminus, the 235-residue chain is Small ribosomal subunit protein uS2 (235 aa).

The protein belongs to the universal ribosomal protein uS2 family.

The polypeptide is Small ribosomal subunit protein uS2 (Geobacillus kaustophilus (strain HTA426)).